Here is a 370-residue protein sequence, read N- to C-terminus: UDP-N-acetylglucosamine--N-acetylmuramyl-(pentapeptide) pyrophosphoryl-undecaprenol N-acetylglucosamine transferase (370 aa).

UDP-N-acetyl-alpha-D-glucosamine-binding positions include 10–12 (TGG), Asn124, Ser196, Ile253, and Gln298.

This sequence belongs to the glycosyltransferase 28 family. MurG subfamily.

The protein localises to the cell membrane. The catalysed reaction is Mur2Ac(oyl-L-Ala-gamma-D-Glu-L-Lys-D-Ala-D-Ala)-di-trans,octa-cis-undecaprenyl diphosphate + UDP-N-acetyl-alpha-D-glucosamine = beta-D-GlcNAc-(1-&gt;4)-Mur2Ac(oyl-L-Ala-gamma-D-Glu-L-Lys-D-Ala-D-Ala)-di-trans,octa-cis-undecaprenyl diphosphate + UDP + H(+). Its pathway is cell wall biogenesis; peptidoglycan biosynthesis. Its function is as follows. Cell wall formation. Catalyzes the transfer of a GlcNAc subunit on undecaprenyl-pyrophosphoryl-MurNAc-pentapeptide (lipid intermediate I) to form undecaprenyl-pyrophosphoryl-MurNAc-(pentapeptide)GlcNAc (lipid intermediate II). This Limosilactobacillus reuteri subsp. reuteri (strain JCM 1112) (Lactobacillus reuteri) protein is UDP-N-acetylglucosamine--N-acetylmuramyl-(pentapeptide) pyrophosphoryl-undecaprenol N-acetylglucosamine transferase.